A 626-amino-acid polypeptide reads, in one-letter code: Chaperone protein DnaK (626 aa).

Threonine 197 bears the Phosphothreonine; by autocatalysis mark. The span at 598–612 (AQGEQGQAAQPQAET) shows a compositional bias: low complexity. Residues 598 to 626 (AQGEQGQAAQPQAETQGDDVQDVEFEEVK) are disordered. Over residues 613–626 (QGDDVQDVEFEEVK) the composition is skewed to acidic residues.

Belongs to the heat shock protein 70 family.

Functionally, acts as a chaperone. The sequence is that of Chaperone protein DnaK from Flavobacterium psychrophilum (strain ATCC 49511 / DSM 21280 / CIP 103535 / JIP02/86).